We begin with the raw amino-acid sequence, 412 residues long: Zinc finger protein 821 (412 aa).

The disordered stretch occupies residues 26-83 (RQAMMKTDFPGDLGSQRQAIQQLRDQDSSSSDSEGDEEETTQDEVSSHTSEEDGGVVK). Over residues 58 to 67 (SEGDEEETTQ) the composition is skewed to acidic residues. 2 C2H2-type zinc fingers span residues 116–140 (GLCQ…VYQH) and 150–172 (YMCP…LLIH). Residues 257-366 (KWALRRQNEP…EKMDMMLRAQ (110 aa)) are a coiled coil. The disordered stretch occupies residues 278–319 (RTAKKSRRDNETPEEREVRRMRDREAKRLQRMQETDEQRARR).

This sequence belongs to the krueppel C2H2-type zinc-finger protein family.

The protein resides in the nucleus. Its function is as follows. May be involved in transcriptional regulation. The polypeptide is Zinc finger protein 821 (ZNF821) (Bos taurus (Bovine)).